Consider the following 130-residue polypeptide: Anti-adapter protein IraD (130 aa).

This sequence belongs to the GpW/Gp25 family. IraD subfamily. As to quaternary structure, interacts with RssB.

It is found in the cytoplasm. Functionally, inhibits RpoS proteolysis by regulating RssB activity, thereby increasing the stability of the sigma stress factor RpoS during oxidative stress. Its effect on RpoS stability is due to its interaction with RssB, which probably blocks the interaction of RssB with RpoS, and the consequent delivery of the RssB-RpoS complex to the ClpXP protein degradation pathway. This chain is Anti-adapter protein IraD, found in Escherichia coli O9:H4 (strain HS).